A 76-amino-acid chain; its full sequence is VpAmp1.0 (76 aa).

Residues 1–22 form the signal peptide; the sequence is MKLINLVPVFFVLIIVVDYCHS. Ile-41 is modified (isoleucine amide). The propeptide occupies 42 to 76; that stretch reads GKRSVESQRYVDLNRRDLEQDLQELQDFLDQISEH.

The protein belongs to the non-disulfide-bridged peptide (NDBP) superfamily. Short antimicrobial peptide (group 4) family. In terms of tissue distribution, expressed by the venom gland.

It localises to the secreted. Its subcellular location is the target cell membrane. In terms of biological role, antimicrobial peptide with potent activity against Gram-positive bacteria S.aureus (MIC=2.5 uM) and S.agalactiaea (MIC=2.5 uM), and Gram-negative bacteria E.coli (MIC=24 uM) and P.aeruginosa (MIC=2.5 uM), as well as against yeasts Candida albicans (MIC=6.25 uM) and C.glabrata (MIC&gt;50 uM). Also elicits high hemolysis on human erythrocytes (HC(50)=9.2 uM). This is VpAmp1.0 from Mesomexovis punctatus (Scorpion).